The primary structure comprises 236 residues: Phosphoribosylaminoimidazole-succinocarboxamide synthase (236 aa).

The protein belongs to the SAICAR synthetase family.

The catalysed reaction is 5-amino-1-(5-phospho-D-ribosyl)imidazole-4-carboxylate + L-aspartate + ATP = (2S)-2-[5-amino-1-(5-phospho-beta-D-ribosyl)imidazole-4-carboxamido]succinate + ADP + phosphate + 2 H(+). It functions in the pathway purine metabolism; IMP biosynthesis via de novo pathway; 5-amino-1-(5-phospho-D-ribosyl)imidazole-4-carboxamide from 5-amino-1-(5-phospho-D-ribosyl)imidazole-4-carboxylate: step 1/2. This chain is Phosphoribosylaminoimidazole-succinocarboxamide synthase, found in Rickettsia typhi (strain ATCC VR-144 / Wilmington).